The sequence spans 161 residues: Ecotin (161 aa).

The first 23 residues, 1–23 (MGNFTVRATAGLMLASLSTLAHA), serve as a signal peptide directing secretion. The cysteines at positions 69 and 106 are disulfide-linked.

Belongs to the protease inhibitor I11 (ecotin) family. Homodimer.

The protein resides in the periplasm. Its function is as follows. General inhibitor of family S1 serine proteases. The protein is Ecotin of Pseudomonas fluorescens (strain Pf0-1).